Consider the following 86-residue polypeptide: Small ribosomal subunit protein bS20 (86 aa).

Residues 1–11 (MANIKSQIKRN) show a composition bias toward polar residues. The tract at residues 1-20 (MANIKSQIKRNLTNEKRHQA) is disordered.

It belongs to the bacterial ribosomal protein bS20 family.

In terms of biological role, binds directly to 16S ribosomal RNA. This is Small ribosomal subunit protein bS20 from Acholeplasma laidlawii (strain PG-8A).